We begin with the raw amino-acid sequence, 126 residues long: Aspartate 1-decarboxylase (126 aa).

Ser25 acts as the Schiff-base intermediate with substrate; via pyruvic acid in catalysis. Pyruvic acid (Ser) is present on Ser25. Thr57 serves as a coordination point for substrate. Tyr58 functions as the Proton donor in the catalytic mechanism. 73-75 (GAA) contacts substrate.

This sequence belongs to the PanD family. As to quaternary structure, heterooctamer of four alpha and four beta subunits. The cofactor is pyruvate. Is synthesized initially as an inactive proenzyme, which is activated by self-cleavage at a specific serine bond to produce a beta-subunit with a hydroxyl group at its C-terminus and an alpha-subunit with a pyruvoyl group at its N-terminus.

It is found in the cytoplasm. The catalysed reaction is L-aspartate + H(+) = beta-alanine + CO2. It functions in the pathway cofactor biosynthesis; (R)-pantothenate biosynthesis; beta-alanine from L-aspartate: step 1/1. Its function is as follows. Catalyzes the pyruvoyl-dependent decarboxylation of aspartate to produce beta-alanine. This Serratia proteamaculans (strain 568) protein is Aspartate 1-decarboxylase.